We begin with the raw amino-acid sequence, 319 residues long: Ferrochelatase (319 aa).

Fe cation-binding residues include His-193 and Glu-274.

Belongs to the ferrochelatase family.

It is found in the cytoplasm. The catalysed reaction is heme b + 2 H(+) = protoporphyrin IX + Fe(2+). Its pathway is porphyrin-containing compound metabolism; protoheme biosynthesis; protoheme from protoporphyrin-IX: step 1/1. Catalyzes the ferrous insertion into protoporphyrin IX. This chain is Ferrochelatase, found in Actinobacillus pleuropneumoniae serotype 5b (strain L20).